Reading from the N-terminus, the 513-residue chain is V-type proton ATPase subunit B, kidney isoform (513 aa).

Polar residues predominate over residues 1 to 18; that stretch reads MATTVDSRSSGFTGNSCD. The tract at residues 1–21 is disordered; sequence MATTVDSRSSGFTGNSCDPGT. Arg394 is a binding site for ATP. Positions 510-513 match the PDZ-binding motif; the sequence is DTAL.

Belongs to the ATPase alpha/beta chains family. In terms of assembly, V-ATPase is a heteromultimeric enzyme made up of two complexes: the ATP-hydrolytic V1 complex and the proton translocation V0 complex. The V1 complex consists of three catalytic AB heterodimers that form a heterohexamer, three peripheral stalks each consisting of EG heterodimers, one central rotor including subunits D and F, and the regulatory subunits C and H. The proton translocation complex V0 consists of the proton transport subunit a, a ring of proteolipid subunits c9c'', rotary subunit d, subunits e and f, and the accessory subunits ATP6AP1/Ac45 and ATP6AP2/PRR. Forms a complex with NHERF1 and SCL4A7. In terms of tissue distribution, highly expressed in the kidney; found in early distal nephron, encompassing thick ascending limbs and distal convoluted tubules and in the alpha-intercalated cells of the cortical collecting ducts (at protein level). Expressed in the olfactory epithelium (at protein level). Expressed at lower levels in the testis.

It localises to the apical cell membrane. It is found in the basolateral cell membrane. In terms of biological role, non-catalytic subunit of the V1 complex of vacuolar(H+)-ATPase (V-ATPase), a multisubunit enzyme composed of a peripheral complex (V1) that hydrolyzes ATP and a membrane integral complex (V0) that translocates protons. V-ATPase is responsible for acidifying and maintaining the pH of intracellular compartments and in some cell types, is targeted to the plasma membrane, where it is responsible for acidifying the extracellular environment. Essential for the proper assembly and activity of V-ATPase. In renal intercalated cells, mediates secretion of protons (H+) into the urine thereby ensuring correct urinary acidification. Required for optimal olfactory function by mediating the acidification of the nasal olfactory epithelium. This Mus musculus (Mouse) protein is V-type proton ATPase subunit B, kidney isoform (Atp6v1b1).